Reading from the N-terminus, the 397-residue chain is Elongation factor Tu (397 aa).

The region spanning 10 to 206 is the tr-type G domain; the sequence is KPHVNIGTIG…AVDTAIPEPE (197 aa). Positions 19–26 are G1; sequence GHIDHGKT. 19–26 provides a ligand contact to GTP; the sequence is GHIDHGKT. Position 26 (threonine 26) interacts with Mg(2+). A G2 region spans residues 62-66; sequence GITIS. Residues 83–86 form a G3 region; it reads DCPG. GTP-binding positions include 83–87 and 138–141; these read DCPGH and NKAD. A G4 region spans residues 138 to 141; sequence NKAD. The G5 stretch occupies residues 176–178; sequence SAL.

Belongs to the TRAFAC class translation factor GTPase superfamily. Classic translation factor GTPase family. EF-Tu/EF-1A subfamily. Monomer.

It localises to the cytoplasm. The enzyme catalyses GTP + H2O = GDP + phosphate + H(+). GTP hydrolase that promotes the GTP-dependent binding of aminoacyl-tRNA to the A-site of ribosomes during protein biosynthesis. The chain is Elongation factor Tu from Kineococcus radiotolerans (strain ATCC BAA-149 / DSM 14245 / SRS30216).